A 188-amino-acid polypeptide reads, in one-letter code: Peptidyl-tRNA hydrolase (188 aa).

TRNA is bound at residue Tyr15. His20 acts as the Proton acceptor in catalysis. Phe63, Asn65, and Asn111 together coordinate tRNA.

This sequence belongs to the PTH family. Monomer.

It localises to the cytoplasm. The catalysed reaction is an N-acyl-L-alpha-aminoacyl-tRNA + H2O = an N-acyl-L-amino acid + a tRNA + H(+). Its function is as follows. Hydrolyzes ribosome-free peptidyl-tRNAs (with 1 or more amino acids incorporated), which drop off the ribosome during protein synthesis, or as a result of ribosome stalling. Functionally, catalyzes the release of premature peptidyl moieties from peptidyl-tRNA molecules trapped in stalled 50S ribosomal subunits, and thus maintains levels of free tRNAs and 50S ribosomes. The polypeptide is Peptidyl-tRNA hydrolase (Hydrogenobaculum sp. (strain Y04AAS1)).